A 321-amino-acid polypeptide reads, in one-letter code: Chitinase-like protein 1 (321 aa).

The first 26 residues, methionine 1 to glycine 26, serve as a signal peptide directing secretion. A disulfide bridge connects residues cysteine 42 and cysteine 55. N-linked (GlcNAc...) asparagine glycosylation is present at asparagine 57. Cysteines 157 and 167 form a disulfide. Residues asparagine 208 and asparagine 244 are each glycosylated (N-linked (GlcNAc...) asparagine). Cysteine 267 and cysteine 304 are oxidised to a cystine. Residues glycine 297–serine 321 are disordered. A compositionally biased stretch (polar residues) spans phenylalanine 310–serine 321.

Belongs to the glycosyl hydrolase 19 family. Mostly expressed in seedlings shoots and roots, stems, and flowers, and, to a lower extent, in flowers, mature leaves and roots.

It localises to the secreted. No chitinase activity. Essential for normal plant growth and development. Regulates cell expansion extent and differentiation at least in roots and hypocotyls. Prevents lignin accumulation in the pith. May modulate ethylene-mediated regulation during development. Probably required to establish thermotolerance acclimation. Plays a role for controlled anisotropic cell expansion in the regulation of waving during root gravitropism and thigmotropism. Involved in the root system architecture adaptation to multiple environmental conditions such as nitrate. Contributes to salt tolerance and possibly to drought by preventing the overaccumulation of sodium ions. This Arabidopsis thaliana (Mouse-ear cress) protein is Chitinase-like protein 1 (CTL1).